Here is a 273-residue protein sequence, read N- to C-terminus: NH(3)-dependent NAD(+) synthetase (273 aa).

Residue 47 to 54 (GISGGQDS) coordinates ATP. Residue Asp53 coordinates Mg(2+). Arg139 is a deamido-NAD(+) binding site. Thr159 is an ATP binding site. Glu164 provides a ligand contact to Mg(2+). Deamido-NAD(+) contacts are provided by Lys172 and Asp179. Residues Lys188 and Thr210 each contribute to the ATP site. 259-260 (HK) contacts deamido-NAD(+).

It belongs to the NAD synthetase family. Homodimer.

It carries out the reaction deamido-NAD(+) + NH4(+) + ATP = AMP + diphosphate + NAD(+) + H(+). Its pathway is cofactor biosynthesis; NAD(+) biosynthesis; NAD(+) from deamido-NAD(+) (ammonia route): step 1/1. Functionally, catalyzes the ATP-dependent amidation of deamido-NAD to form NAD. Uses ammonia as a nitrogen source. This chain is NH(3)-dependent NAD(+) synthetase, found in Staphylococcus aureus (strain bovine RF122 / ET3-1).